A 158-amino-acid chain; its full sequence is NADH-quinone oxidoreductase subunit B (158 aa).

Cysteine 37, cysteine 38, cysteine 102, and cysteine 132 together coordinate [4Fe-4S] cluster.

The protein belongs to the complex I 20 kDa subunit family. In terms of assembly, NDH-1 is composed of 14 different subunits. Subunits NuoB, C, D, E, F, and G constitute the peripheral sector of the complex. It depends on [4Fe-4S] cluster as a cofactor.

Its subcellular location is the cell inner membrane. It carries out the reaction a quinone + NADH + 5 H(+)(in) = a quinol + NAD(+) + 4 H(+)(out). NDH-1 shuttles electrons from NADH, via FMN and iron-sulfur (Fe-S) centers, to quinones in the respiratory chain. The immediate electron acceptor for the enzyme in this species is believed to be ubiquinone. Couples the redox reaction to proton translocation (for every two electrons transferred, four hydrogen ions are translocated across the cytoplasmic membrane), and thus conserves the redox energy in a proton gradient. The protein is NADH-quinone oxidoreductase subunit B of Halorhodospira halophila (strain DSM 244 / SL1) (Ectothiorhodospira halophila (strain DSM 244 / SL1)).